A 260-amino-acid chain; its full sequence is Snake venom serine protease gussurobin (260 aa).

The N-terminal stretch at 1–18 (MVLIRVLANLLILQLSYA) is a signal peptide. Positions 19 to 24 (QKSSEL) are excised as a propeptide. In terms of domain architecture, Peptidase S1 spans 25–251 (IIGGDECNIN…YTEWIQSTIA (227 aa)). 6 disulfide bridges follow: cysteine 31/cysteine 165, cysteine 52/cysteine 68, cysteine 100/cysteine 258, cysteine 144/cysteine 212, cysteine 176/cysteine 191, and cysteine 202/cysteine 227. Residues histidine 67 and aspartate 112 each act as charge relay system in the active site. Residues asparagine 123 and asparagine 124 are each glycosylated (N-linked (GlcNAc...) asparagine). Serine 206 functions as the Charge relay system in the catalytic mechanism.

The protein belongs to the peptidase S1 family. Snake venom subfamily. In terms of assembly, monomer. As to expression, expressed by the venom gland.

The protein resides in the secreted. In terms of biological role, snake venom serine protease that may act in the hemostasis system of the prey. The protein is Snake venom serine protease gussurobin of Gloydius ussuriensis (Ussuri mamushi).